A 394-amino-acid polypeptide reads, in one-letter code: ATP phosphoribosyltransferase regulatory subunit (394 aa).

The protein belongs to the class-II aminoacyl-tRNA synthetase family. HisZ subfamily. In terms of assembly, heteromultimer composed of HisG and HisZ subunits.

It localises to the cytoplasm. Its pathway is amino-acid biosynthesis; L-histidine biosynthesis; L-histidine from 5-phospho-alpha-D-ribose 1-diphosphate: step 1/9. Required for the first step of histidine biosynthesis. May allow the feedback regulation of ATP phosphoribosyltransferase activity by histidine. This is ATP phosphoribosyltransferase regulatory subunit from Teredinibacter turnerae (strain ATCC 39867 / T7901).